We begin with the raw amino-acid sequence, 255 residues long: MAVISMKQLLEAGVHFGHQTRRWNPKMKKYIFTERNGIYIIDLQKTVKKVDEAYNFLKQVSEDGGQVLFVGTKKQAQESVKSEAERAGQFYINQRWLGGLLTNYKTISKRIKRISEIEKMEEDGLFEVLPKKEVVELKKEYDRLIKFLGGIRDMKSMPQALFVVDPRKERNAIAEARKLNIPIVGIVDTNCDPDEIDYVIPANDDAIRAVKLLTAKMADAILEGQQGVSNEEVAAEQNIDLDEKEKSEETEATEE.

The disordered stretch occupies residues 226–255 (QGVSNEEVAAEQNIDLDEKEKSEETEATEE).

This sequence belongs to the universal ribosomal protein uS2 family.

The sequence is that of Small ribosomal subunit protein uS2 from Staphylococcus aureus (strain Mu3 / ATCC 700698).